The primary structure comprises 373 residues: Bilirubin reductase (373 aa).

Q92 provides a ligand contact to FMN. The Proton donor role is filled by R168. Position 215 (K215) interacts with FMN. Positions 344, 347, 351, and 363 each coordinate [4Fe-4S] cluster.

Belongs to the NADH:flavin oxidoreductase/NADH oxidase family. FMN is required as a cofactor. It depends on [4Fe-4S] cluster as a cofactor.

The catalysed reaction is urobilinogen + 4 A = (4Z,15Z)-bilirubin IXalpha + 4 AH2. It carries out the reaction urobilinogen + 2 A = (4Z,15Z)-mesobilirubin IXalpha + 2 AH2. Its pathway is porphyrin-containing compound metabolism; protoheme degradation. Functionally, bilirubin reductase that catalyzes reduction of mesobilirubin and/or bilirubin to urobilinogen, a key step during heme degradation. Cooperates with BilS, which is probably involved in electron transfer for BilR. Urobilinogen then spontaneously degrades into urobilin, which gives urine its distinctive yellow color. The chain is Bilirubin reductase from Clostridium symbiosum (strain WAL-14163).